A 117-amino-acid chain; its full sequence is UPF0342 protein Bcer98_0695 (117 aa).

This sequence belongs to the UPF0342 family.

This is UPF0342 protein Bcer98_0695 from Bacillus cytotoxicus (strain DSM 22905 / CIP 110041 / 391-98 / NVH 391-98).